A 144-amino-acid chain; its full sequence is Putative pre-16S rRNA nuclease (144 aa).

The protein belongs to the YqgF nuclease family.

Its subcellular location is the cytoplasm. Could be a nuclease involved in processing of the 5'-end of pre-16S rRNA. The polypeptide is Putative pre-16S rRNA nuclease (Prochlorococcus marinus (strain NATL1A)).